The primary structure comprises 490 residues: Aspartyl/glutamyl-tRNA(Asn/Gln) amidotransferase subunit B (490 aa).

Belongs to the GatB/GatE family. GatB subfamily. As to quaternary structure, heterotrimer of A, B and C subunits.

It catalyses the reaction L-glutamyl-tRNA(Gln) + L-glutamine + ATP + H2O = L-glutaminyl-tRNA(Gln) + L-glutamate + ADP + phosphate + H(+). It carries out the reaction L-aspartyl-tRNA(Asn) + L-glutamine + ATP + H2O = L-asparaginyl-tRNA(Asn) + L-glutamate + ADP + phosphate + 2 H(+). In terms of biological role, allows the formation of correctly charged Asn-tRNA(Asn) or Gln-tRNA(Gln) through the transamidation of misacylated Asp-tRNA(Asn) or Glu-tRNA(Gln) in organisms which lack either or both of asparaginyl-tRNA or glutaminyl-tRNA synthetases. The reaction takes place in the presence of glutamine and ATP through an activated phospho-Asp-tRNA(Asn) or phospho-Glu-tRNA(Gln). The sequence is that of Aspartyl/glutamyl-tRNA(Asn/Gln) amidotransferase subunit B from Prochlorococcus marinus (strain MIT 9515).